Reading from the N-terminus, the 574-residue chain is 2-succinyl-5-enolpyruvyl-6-hydroxy-3-cyclohexene-1-carboxylate synthase (574 aa).

It belongs to the TPP enzyme family. MenD subfamily. As to quaternary structure, homodimer. Mg(2+) serves as cofactor. Mn(2+) is required as a cofactor. It depends on thiamine diphosphate as a cofactor.

The enzyme catalyses isochorismate + 2-oxoglutarate + H(+) = 5-enolpyruvoyl-6-hydroxy-2-succinyl-cyclohex-3-ene-1-carboxylate + CO2. It functions in the pathway quinol/quinone metabolism; 1,4-dihydroxy-2-naphthoate biosynthesis; 1,4-dihydroxy-2-naphthoate from chorismate: step 2/7. The protein operates within quinol/quinone metabolism; menaquinone biosynthesis. Functionally, catalyzes the thiamine diphosphate-dependent decarboxylation of 2-oxoglutarate and the subsequent addition of the resulting succinic semialdehyde-thiamine pyrophosphate anion to isochorismate to yield 2-succinyl-5-enolpyruvyl-6-hydroxy-3-cyclohexene-1-carboxylate (SEPHCHC). In Rubrobacter xylanophilus (strain DSM 9941 / JCM 11954 / NBRC 16129 / PRD-1), this protein is 2-succinyl-5-enolpyruvyl-6-hydroxy-3-cyclohexene-1-carboxylate synthase.